Consider the following 896-residue polypeptide: Chromatin assembly factor 1 subunit A-A (896 aa).

3 disordered regions span residues 1–23 (MPGK…KKMV), 185–377 (TSTS…EEEK), and 552–610 (DSDE…DPEN). The span at 10–21 (VMQSSTKSNTKK) shows a compositional bias: polar residues. Low complexity predominate over residues 211–226 (ASVSSSSSPVSLSSPD). The segment covering 227–236 (AQTGSQFRNR) has biased composition (polar residues). The segment covering 237–246 (SSPSTSTTPT) has biased composition (low complexity). Basic and acidic residues predominate over residues 255-284 (SADKNKTKDKDKQRQAEKEERERAKKEARS). The span at 285–302 (AKKKKRQGLLKNLQRKRG) shows a compositional bias: basic residues. Over residues 308 to 377 (SGKEYKKEKK…EEKRLKEEEK (70 aa)) the composition is skewed to basic and acidic residues. Composition is skewed to acidic residues over residues 552 to 563 (DSDEEWEEEEPG), 572 to 586 (ENDD…DDDG), and 595 to 607 (SDDE…ECTD). A necessary for homodimerization, competence for chromatin assembly region spans residues 642-678 (CVWWDSKASEISLLQKFSACILESPAVDEELAQEISS). The tract at residues 724–743 (SDAAGNESTSPNVTPQTPSN) is disordered. Residues 729–743 (NESTSPNVTPQTPSN) are compositionally biased toward polar residues.

This sequence belongs to the CHAF1A family. In terms of assembly, homodimer.

It localises to the nucleus. Functionally, involved in chromatin assembly in DNA replication and DNA repair. This Xenopus laevis (African clawed frog) protein is Chromatin assembly factor 1 subunit A-A (chaf1a-a).